Consider the following 121-residue polypeptide: Natriuretic peptides B (121 aa).

The N-terminal stretch at 1-26 (MDLLKVLSQMILFLLFLYLSPLGGHS) is a signal peptide. A disordered region spans residues 61–89 (LKDQGLTKEHPKRVLRSQGSTLRVQQRPQ). Over residues 77–89 (SQGSTLRVQQRPQ) the composition is skewed to polar residues. A disulfide bridge connects residues C99 and C115.

This sequence belongs to the natriuretic peptide family. In terms of processing, the precursor molecule is proteolytically cleaved by the endoprotease Furin to produce brain natriuretic peptide 45. May undergo further proteolytic cleavage by various proteases such as DPP4, MME and possibly FAP, to give rise to a variety of shorter peptides. May be cleaved at Ser-91 by the prolyl endopeptidase FAP (seprase) activity (in vitro). May be degraded by IDE. During IDE degradation, the resulting products initially increase the activation of NPR1 and can also stimulate NPR2 to produce cGMP before the fragments are completely degraded and inactivated by IDE (in vitro). In terms of tissue distribution, expressed abundantly in the ventricle, and in a lesser extent in the atrium (at protein level).

It is found in the secreted. Functionally, cardiac hormone that plays a key role in mediating cardio-renal homeostasis. May also function as a paracrine antifibrotic factor in the heart. Acts by specifically binding and stimulating NPR1 to produce cGMP, which in turn activates effector proteins that drive various biological responses. Likely involved in regulating the extracellular fluid volume and maintaining the fluid-electrolyte balance through natriuresis, diuresis, kaluresis and chloruresis. The protein is Natriuretic peptides B (Nppb) of Mus musculus (Mouse).